The primary structure comprises 459 residues: Cysteine--tRNA ligase (459 aa).

C28 contributes to the Zn(2+) binding site. The short motif at 30–40 is the 'HIGH' region element; the sequence is VTIYDLCHIGH. The Zn(2+) site is built by C209, H234, and E238. Positions 266–270 match the 'KMSKS' region motif; that stretch reads KMSKS. An ATP-binding site is contributed by K269.

It belongs to the class-I aminoacyl-tRNA synthetase family. As to quaternary structure, monomer. Zn(2+) serves as cofactor.

The protein resides in the cytoplasm. It catalyses the reaction tRNA(Cys) + L-cysteine + ATP = L-cysteinyl-tRNA(Cys) + AMP + diphosphate. The protein is Cysteine--tRNA ligase of Shewanella baltica (strain OS155 / ATCC BAA-1091).